The following is a 96-amino-acid chain: UPF0213 protein BCE33L0031 (96 aa).

The GIY-YIG domain occupies 4–79 (NKHCFYVVEC…KQLNRKQKEE (76 aa)).

It belongs to the UPF0213 family.

The sequence is that of UPF0213 protein BCE33L0031 from Bacillus cereus (strain ZK / E33L).